We begin with the raw amino-acid sequence, 236 residues long: NAP1-binding protein 2 (236 aa).

A Phosphoserine modification is found at serine 102. Positions 110–171 constitute an SH3 domain; it reads IVNQRAVALY…PEEFVSYIQP (62 aa). 2 positions are modified to phosphoserine: serine 196 and serine 235.

Interacts with PBS2 and PTC1.

It is found in the cytoplasm. Negatively regulates the high-osmolarity glycerol (HOG) pathway through its negative regulation of the HOG1 kinase activity. Mediates the binding between the PTC1 phosphatase and the PBS2 MAP/ERK kinase (MEK). With PTC1, regulates endoplasmic reticulum inheritance through the cell wall integrity (CWI) MAPK pathway by modulating the MAPK, SLT2. This Saccharomyces cerevisiae (strain ATCC 204508 / S288c) (Baker's yeast) protein is NAP1-binding protein 2 (NBP2).